The following is a 311-amino-acid chain: Putative methylthioribose-1-phosphate isomerase (311 aa).

Substrate-binding positions include arginine 46–alanine 48, arginine 80, and glutamine 174. Aspartate 215 functions as the Proton donor in the catalytic mechanism. Position 224-225 (asparagine 224–lysine 225) interacts with substrate.

It belongs to the eIF-2B alpha/beta/delta subunits family. MtnA subfamily.

It catalyses the reaction 5-(methylsulfanyl)-alpha-D-ribose 1-phosphate = 5-(methylsulfanyl)-D-ribulose 1-phosphate. Functionally, catalyzes the interconversion of methylthioribose-1-phosphate (MTR-1-P) into methylthioribulose-1-phosphate (MTRu-1-P). This chain is Putative methylthioribose-1-phosphate isomerase, found in Methanothermobacter thermautotrophicus (strain ATCC 29096 / DSM 1053 / JCM 10044 / NBRC 100330 / Delta H) (Methanobacterium thermoautotrophicum).